The sequence spans 307 residues: Predicted GPI-anchored protein 44 (307 aa).

The signal sequence occupies residues 1–22 (MLSTNNLLILLIFSFLITNVKS). Residues Asn146 and Asn217 are each glycosylated (N-linked (GlcNAc...) asparagine). The tract at residues 232–261 (TPQPLLETPSQESSAPNIDSTTPTTIDNTV) is disordered. Positions 239 to 254 (TPSQESSAPNIDSTTP) are enriched in polar residues. A lipid anchor (GPI-anchor amidated glycine) is attached at Gly286. The propeptide at 287-307 (GAMGYPSISVALGLVFIAYLV) is removed in mature form.

Its subcellular location is the cell membrane. This chain is Predicted GPI-anchored protein 44 (PGA44), found in Candida albicans (strain SC5314 / ATCC MYA-2876) (Yeast).